The following is a 562-amino-acid chain: Arylsulfatase H (562 aa).

Residues Asp-15, Asp-16, and Cys-55 each coordinate Ca(2+). The active-site Nucleophile is Cys-55. The residue at position 55 (Cys-55) is a 3-oxoalanine (Cys). Lys-115 lines the substrate pocket. The active site involves His-117. 2 consecutive transmembrane segments (helical) span residues 167–187 (LWIS…PKYA) and 189–209 (WFVV…LFFI). His-271 provides a ligand contact to substrate. Ca(2+) is bound by residues Asp-323 and Asn-324.

This sequence belongs to the sulfatase family. The cofactor is Ca(2+). In terms of processing, the conversion to 3-oxoalanine (also known as C-formylglycine, FGly), of a serine or cysteine residue in prokaryotes and of a cysteine residue in eukaryotes, is critical for catalytic activity.

The protein resides in the membrane. This chain is Arylsulfatase H (ARSH), found in Canis lupus familiaris (Dog).